A 46-amino-acid chain; its full sequence is Amine oxidase [flavin-containing] A (46 aa).

Belongs to the flavin monoamine oxidase family. As to quaternary structure, monomer, homo- or heterodimer (containing two subunits of similar size). Each subunit contains a covalently bound flavin. Enzymatically active as monomer. FAD serves as cofactor.

It localises to the mitochondrion outer membrane. It carries out the reaction a secondary aliphatic amine + O2 + H2O = a primary amine + an aldehyde + H2O2. The catalysed reaction is a primary methyl amine + O2 + H2O = an aldehyde + H2O2 + NH4(+). The enzyme catalyses (R)-adrenaline + O2 + H2O = (R)-3,4-dihydroxymandelaldehyde + methylamine + H2O2. It catalyses the reaction dopamine + O2 + H2O = 3,4-dihydroxyphenylacetaldehyde + H2O2 + NH4(+). It carries out the reaction tyramine + O2 + H2O = (4-hydroxyphenyl)acetaldehyde + H2O2 + NH4(+). The catalysed reaction is (R)-noradrenaline + O2 + H2O = (R)-3,4-dihydroxymandelaldehyde + H2O2 + NH4(+). The enzyme catalyses serotonin + O2 + H2O = (5-hydroxyindol-3-yl)acetaldehyde + H2O2 + NH4(+). It catalyses the reaction kynuramine + O2 + H2O = 3-(2-aminophenyl)-3-oxopropanal + H2O2 + NH4(+). It carries out the reaction tryptamine + O2 + H2O = indole-3-acetaldehyde + H2O2 + NH4(+). The catalysed reaction is 2-phenylethylamine + O2 + H2O = 2-phenylacetaldehyde + H2O2 + NH4(+). Functionally, catalyzes the oxidative deamination of primary and some secondary amine such as neurotransmitters, with concomitant reduction of oxygen to hydrogen peroxide and has important functions in the metabolism of neuroactive and vasoactive amines in the central nervous system and peripheral tissues. Preferentially oxidizes serotonin. Also catalyzes the oxidative deamination of kynuramine to 3-(2-aminophenyl)-3-oxopropanal that can spontaneously condense to 4-hydroxyquinoline. In Ovis aries (Sheep), this protein is Amine oxidase [flavin-containing] A.